The following is a 251-amino-acid chain: Uridylate kinase (251 aa).

An ATP-binding site is contributed by 26–29 (KLGG). UMP is bound at residue Gly-67. The ATP site is built by Gly-68 and Arg-72. UMP-binding positions include Asp-87 and 148 to 155 (MGLPYFST). ATP-binding residues include Phe-181 and Asp-184.

It belongs to the UMP kinase family. Homohexamer.

Its subcellular location is the cytoplasm. The enzyme catalyses UMP + ATP = UDP + ADP. The protein operates within pyrimidine metabolism; CTP biosynthesis via de novo pathway; UDP from UMP (UMPK route): step 1/1. Inhibited by UTP. Catalyzes the reversible phosphorylation of UMP to UDP. The sequence is that of Uridylate kinase from Mycolicibacterium vanbaalenii (strain DSM 7251 / JCM 13017 / BCRC 16820 / KCTC 9966 / NRRL B-24157 / PYR-1) (Mycobacterium vanbaalenii).